Consider the following 190-residue polypeptide: Peptide methionine sulfoxide reductase A2-2 (190 aa).

The interval 1–20 (MSNDTGADGGAANPDLGPDA) is disordered. The segment covering 10–20 (GAANPDLGPDA) has biased composition (low complexity).

This sequence belongs to the MsrA Met sulfoxide reductase family.

The protein resides in the cytoplasm. Its subcellular location is the cytosol. The enzyme catalyses L-methionyl-[protein] + [thioredoxin]-disulfide + H2O = L-methionyl-(S)-S-oxide-[protein] + [thioredoxin]-dithiol. The catalysed reaction is [thioredoxin]-disulfide + L-methionine + H2O = L-methionine (S)-S-oxide + [thioredoxin]-dithiol. Functionally, catalyzes the reduction of methionine sulfoxide (MetSO) to methionine in proteins. Plays a protective role against oxidative stress by restoring activity to proteins that have been inactivated by methionine oxidation. MSRA family specifically reduces the MetSO S-enantiomer. In Oryza sativa subsp. japonica (Rice), this protein is Peptide methionine sulfoxide reductase A2-2 (MSRA2-2).